Reading from the N-terminus, the 359-residue chain is Cytohesin-interacting protein (359 aa).

Residues 77–166 (LVTVEKQDNE…LLTIETLNGT (90 aa)) enclose the PDZ domain. The interval 166-188 (TMILKRTELEAKLQVLKQTLKQK) is interaction with CYTH1. Positions 166–188 (TMILKRTELEAKLQVLKQTLKQK) form a coiled coil.

As to quaternary structure, interacts with CYTH1 and SNX27. Expressed in lymph nodes, thymus, spleen, lung, peripheral blood leukocytes and bone marrow.

Its subcellular location is the cytoplasm. The protein localises to the early endosome. By its binding to cytohesin-1 (CYTH1), it modifies activation of ARFs by CYTH1 and its precise function may be to sequester CYTH1 in the cytoplasm. In Homo sapiens (Human), this protein is Cytohesin-interacting protein (CYTIP).